A 109-amino-acid polypeptide reads, in one-letter code: Small ribosomal subunit protein bS6 (109 aa).

It belongs to the bacterial ribosomal protein bS6 family.

Binds together with bS18 to 16S ribosomal RNA. The protein is Small ribosomal subunit protein bS6 of Anaplasma marginale (strain St. Maries).